The chain runs to 74 residues: MPRQVTDIKLFLQLAHRGDATSARVKKNQNKAVKFKLRCSRYLYTLVVADAKKAEKLRQSLPPALTVTEVGKKA.

Belongs to the eukaryotic ribosomal protein eL38 family. Component of the large ribosomal subunit (LSU). Mature yeast ribosomes consist of a small (40S) and a large (60S) subunit. The 40S small subunit contains 1 molecule of ribosomal RNA (18S rRNA) and at least 33 different proteins. The large 60S subunit contains 3 rRNA molecules (25S, 5.8S and 5S rRNA) and at least 46 different proteins.

It localises to the cytoplasm. In terms of biological role, component of the ribosome, a large ribonucleoprotein complex responsible for the synthesis of proteins in the cell. The small ribosomal subunit (SSU) binds messenger RNAs (mRNAs) and translates the encoded message by selecting cognate aminoacyl-transfer RNA (tRNA) molecules. The large subunit (LSU) contains the ribosomal catalytic site termed the peptidyl transferase center (PTC), which catalyzes the formation of peptide bonds, thereby polymerizing the amino acids delivered by tRNAs into a polypeptide chain. The nascent polypeptides leave the ribosome through a tunnel in the LSU and interact with protein factors that function in enzymatic processing, targeting, and the membrane insertion of nascent chains at the exit of the ribosomal tunnel. The polypeptide is Large ribosomal subunit protein eL38B (rpl3802) (Schizosaccharomyces pombe (strain 972 / ATCC 24843) (Fission yeast)).